The sequence spans 275 residues: NAD kinase (275 aa).

The active-site Proton acceptor is the Asp68. NAD(+) is bound by residues 68–69 (DG), Arg73, 136–137 (NE), Lys147, Arg164, Asp166, 177–182 (TAYAMS), Ala201, and Gln236.

Belongs to the NAD kinase family. The cofactor is a divalent metal cation.

Its subcellular location is the cytoplasm. It carries out the reaction NAD(+) + ATP = ADP + NADP(+) + H(+). In terms of biological role, involved in the regulation of the intracellular balance of NAD and NADP, and is a key enzyme in the biosynthesis of NADP. Catalyzes specifically the phosphorylation on 2'-hydroxyl of the adenosine moiety of NAD to yield NADP. This chain is NAD kinase, found in Methanosarcina barkeri (strain Fusaro / DSM 804).